We begin with the raw amino-acid sequence, 144 residues long: 3-hydroxyacyl-[acyl-carrier-protein] dehydratase FabZ (144 aa).

H48 is an active-site residue.

Belongs to the thioester dehydratase family. FabZ subfamily.

Its subcellular location is the cytoplasm. The catalysed reaction is a (3R)-hydroxyacyl-[ACP] = a (2E)-enoyl-[ACP] + H2O. In terms of biological role, involved in unsaturated fatty acids biosynthesis. Catalyzes the dehydration of short chain beta-hydroxyacyl-ACPs and long chain saturated and unsaturated beta-hydroxyacyl-ACPs. This Listeria innocua serovar 6a (strain ATCC BAA-680 / CLIP 11262) protein is 3-hydroxyacyl-[acyl-carrier-protein] dehydratase FabZ.